The following is a 199-amino-acid chain: Chaperone protein TorD (199 aa).

The protein belongs to the TorD/DmsD family. TorD subfamily.

It is found in the cytoplasm. Functionally, involved in the biogenesis of TorA. Acts on TorA before the insertion of the molybdenum cofactor and, as a result, probably favors a conformation of the apoenzyme that is competent for acquiring the cofactor. This chain is Chaperone protein TorD, found in Actinobacillus pleuropneumoniae serotype 7 (strain AP76).